Consider the following 263-residue polypeptide: MQYGMDSFGLRGIPHQVFIKKKEGKIMSLAWWKRELFGGWTHFEAVWLLMFLGIQAVVFVFNPDSWLASVAAVTGILCVVFVGKGKISNYLFGLISVSLYAYVSYTFKLYGEMMLNLLVYVPVQFVGFAMWRKHMALGETAETEEVKAKALTVRQWLLVVAASVVGTSVYIEWLHHLGSALPTLDGVTVVVSIVAQVLMILRYREQWALWIVVNILTISLWAVAWFKNGETSLPLLLMYVMYLCNSVYGYINWTKLVKRHSGQ.

Topologically, residues 1 to 40 are cytoplasmic; the sequence is MQYGMDSFGLRGIPHQVFIKKKEGKIMSLAWWKRELFGGW. The chain crosses the membrane as a helical span at residues 41 to 61; that stretch reads THFEAVWLLMFLGIQAVVFVF. Residue Asn62 is a topological domain, periplasmic. The helical transmembrane segment at 63–83 threads the bilayer; sequence PDSWLASVAAVTGILCVVFVG. Residues 84-86 are Cytoplasmic-facing; the sequence is KGK. A helical membrane pass occupies residues 87–107; it reads ISNYLFGLISVSLYAYVSYTF. The Periplasmic portion of the chain corresponds to 108–109; that stretch reads KL. The chain crosses the membrane as a helical span at residues 110–131; it reads YGEMMLNLLVYVPVQFVGFAMW. Residue Gln124 coordinates beta-nicotinamide D-riboside. At 132–155 the chain is on the cytoplasmic side; the sequence is RKHMALGETAETEEVKAKALTVRQ. A helical membrane pass occupies residues 156-177; it reads WLLVVAASVVGTSVYIEWLHHL. The Periplasmic segment spans residues 178 to 180; that stretch reads GSA. A helical membrane pass occupies residues 181-201; the sequence is LPTLDGVTVVVSIVAQVLMIL. Gln196 contributes to the beta-nicotinamide D-riboside binding site. Over 202 to 205 the chain is Cytoplasmic; that stretch reads RYRE. A helical membrane pass occupies residues 206 to 226; sequence QWALWIVVNILTISLWAVAWF. Positions 210 and 214 each coordinate beta-nicotinamide D-riboside. Residues 227 to 232 lie on the Periplasmic side of the membrane; the sequence is KNGETS. Residues 233–253 form a helical membrane-spanning segment; sequence LPLLLMYVMYLCNSVYGYINW. A beta-nicotinamide D-riboside-binding site is contributed by Tyr242. At 254-263 the chain is on the cytoplasmic side; sequence TKLVKRHSGQ.

Belongs to the nicotinamide ribonucleoside (NR) uptake permease (TC 4.B.1) family. As to quaternary structure, homotrimer.

The protein resides in the cell inner membrane. In terms of biological role, required for nicotinamide riboside transport across the inner membrane. The protein is Nicotinamide riboside transporter PnuC of Neisseria mucosa (strain ATCC 25996 / DSM 4631 / NCTC 10774 / M26).